A 348-amino-acid chain; its full sequence is Protein-glutamate methylesterase/protein-glutamine glutaminase 2 (348 aa).

One can recognise a Response regulatory domain in the interval 5–122; that stretch reads KVLIIDDSAL…DLGLSQYRDE (118 aa). At D56 the chain carries 4-aspartylphosphate. The CheB-type methylesterase domain occupies 157-348; the sequence is SLKTGFLCAI…AANIIKHALK (192 aa). Catalysis depends on residues S169, H195, and D291.

This sequence belongs to the CheB family. Post-translationally, phosphorylated by CheA. Phosphorylation of the N-terminal regulatory domain activates the methylesterase activity.

It is found in the cytoplasm. The enzyme catalyses [protein]-L-glutamate 5-O-methyl ester + H2O = L-glutamyl-[protein] + methanol + H(+). It catalyses the reaction L-glutaminyl-[protein] + H2O = L-glutamyl-[protein] + NH4(+). Involved in chemotaxis. Part of a chemotaxis signal transduction system that modulates chemotaxis in response to various stimuli. Catalyzes the demethylation of specific methylglutamate residues introduced into the chemoreceptors (methyl-accepting chemotaxis proteins or MCP) by CheR. Also mediates the irreversible deamidation of specific glutamine residues to glutamic acid. In Saccharophagus degradans (strain 2-40 / ATCC 43961 / DSM 17024), this protein is Protein-glutamate methylesterase/protein-glutamine glutaminase 2.